Consider the following 448-residue polypeptide: UDP-glycosyltransferase 79B5 (448 aa).

Residues T261, 320–322 (LEQ), 337–345 (HCGFGSMWE), and 359–362 (LADQ) contribute to the UDP-alpha-D-glucose site.

Belongs to the UDP-glycosyltransferase family.

This Arabidopsis thaliana (Mouse-ear cress) protein is UDP-glycosyltransferase 79B5 (UGT79B5).